The sequence spans 399 residues: Probable 2,3-bisphosphoglycerate-independent phosphoglycerate mutase (399 aa).

The protein belongs to the BPG-independent phosphoglycerate mutase family. A-PGAM subfamily.

The catalysed reaction is (2R)-2-phosphoglycerate = (2R)-3-phosphoglycerate. It functions in the pathway carbohydrate degradation; glycolysis; pyruvate from D-glyceraldehyde 3-phosphate: step 3/5. Functionally, catalyzes the interconversion of 2-phosphoglycerate and 3-phosphoglycerate. The protein is Probable 2,3-bisphosphoglycerate-independent phosphoglycerate mutase of Geobacter sulfurreducens (strain ATCC 51573 / DSM 12127 / PCA).